The chain runs to 116 residues: Small ribosomal subunit protein uS13m (116 aa).

Belongs to the universal ribosomal protein uS13 family. Part of the small ribosomal subunit.

Its subcellular location is the mitochondrion. Its function is as follows. Located at the top of the head of the small subunit, it contacts several helices of the 18S rRNA. This is Small ribosomal subunit protein uS13m (RPS13) from Nicotiana tabacum (Common tobacco).